A 360-amino-acid polypeptide reads, in one-letter code: MTTTQLGLQEQSLWSRFCCWITSTSNRLYIGWFGVLMIPTLLTATTCFIIAFIAAPPVDIDGIREPIAGSLLYGNNIITAAVVPSSNAIGLHFYPIWEAHSLDEWLYNGGPYQLIVFHFLIGIFCYLGRQWELSYRLGMRPWICVAYSAPVAAATATLLIYSIGQGSFSDGLPLGISGTFNFMLVLQAEHNVLMHPFHMLGVAGVFGGALFAAMHGSLVTSSLIRETTEVESQNQGYKFGQEEETYNIVAAHGYFGRLIFQYASFNNSRALHFFLGAWPVVGIWFAALAVCCFAFNLNGFNFNQSILDAQGRPVSTWADVINRANIGFEVMHERNVHNFPLDLASGDAQMVALNAPAIEG.

Helical transmembrane passes span 29 to 46, 118 to 133, and 142 to 156; these read YIGWFGVLMIPTLLTATT, HFLIGIFCYLGRQWEL, and WICVAYSAPVAAATA. Residue His-118 participates in chlorophyll a binding. Residue Tyr-126 participates in pheophytin a binding. [CaMn4O5] cluster contacts are provided by Asp-170 and Glu-189. A helical membrane pass occupies residues 197–218; sequence FHMLGVAGVFGGALFAAMHGSL. His-198 lines the chlorophyll a pocket. A quinone is bound by residues His-215 and 264 to 265; that span reads SF. Fe cation is bound at residue His-215. His-272 lines the Fe cation pocket. The chain crosses the membrane as a helical span at residues 274 to 288; it reads FLGAWPVVGIWFAAL. 4 residues coordinate [CaMn4O5] cluster: His-332, Glu-333, Asp-342, and Ala-344. The propeptide occupies 345–360; it reads SGDAQMVALNAPAIEG.

This sequence belongs to the reaction center PufL/M/PsbA/D family. As to quaternary structure, PSII is composed of 1 copy each of membrane proteins PsbA, PsbB, PsbC, PsbD, PsbE, PsbF, PsbH, PsbI, PsbJ, PsbK, PsbL, PsbM, PsbT, PsbX, PsbY, PsbZ, Psb30/Ycf12, peripheral proteins PsbO, CyanoQ (PsbQ), PsbU, PsbV and a large number of cofactors. It forms dimeric complexes. Requires The D1/D2 heterodimer binds P680, chlorophylls that are the primary electron donor of PSII, and subsequent electron acceptors. It shares a non-heme iron and each subunit binds pheophytin, quinone, additional chlorophylls, carotenoids and lipids. D1 provides most of the ligands for the Mn4-Ca-O5 cluster of the oxygen-evolving complex (OEC). There is also a Cl(-1) ion associated with D1 and D2, which is required for oxygen evolution. The PSII complex binds additional chlorophylls, carotenoids and specific lipids. as cofactor. C-terminally processed by CtpA; processing is essential to allow assembly of the oxygen-evolving complex and photosynthetic growth. In terms of processing, tyr-161 forms a radical intermediate that is referred to as redox-active TyrZ, YZ or Y-Z. Post-translationally, C-terminally processed by CtpA; processing is essential to allow assembly of the oxygen-evolving complex and thus photosynthetic growth.

It is found in the cellular thylakoid membrane. It carries out the reaction 2 a plastoquinone + 4 hnu + 2 H2O = 2 a plastoquinol + O2. Photosystem II (PSII) is a light-driven water:plastoquinone oxidoreductase that uses light energy to abstract electrons from H(2)O, generating O(2) and a proton gradient subsequently used for ATP formation. It consists of a core antenna complex that captures photons, and an electron transfer chain that converts photonic excitation into a charge separation. The D1/D2 (PsbA/PsbD) reaction center heterodimer binds P680, the primary electron donor of PSII as well as several subsequent electron acceptors. This chain is Photosystem II protein D1 1, found in Synechocystis sp. (strain ATCC 27184 / PCC 6803 / Kazusa).